The primary structure comprises 213 residues: ATP-dependent Clp protease proteolytic subunit (213 aa).

Ser114 (nucleophile) is an active-site residue. His139 is a catalytic residue.

It belongs to the peptidase S14 family. As to quaternary structure, fourteen ClpP subunits assemble into 2 heptameric rings which stack back to back to give a disk-like structure with a central cavity, resembling the structure of eukaryotic proteasomes.

The protein resides in the cytoplasm. It carries out the reaction Hydrolysis of proteins to small peptides in the presence of ATP and magnesium. alpha-casein is the usual test substrate. In the absence of ATP, only oligopeptides shorter than five residues are hydrolyzed (such as succinyl-Leu-Tyr-|-NHMec, and Leu-Tyr-Leu-|-Tyr-Trp, in which cleavage of the -Tyr-|-Leu- and -Tyr-|-Trp bonds also occurs).. In terms of biological role, cleaves peptides in various proteins in a process that requires ATP hydrolysis. Has a chymotrypsin-like activity. Plays a major role in the degradation of misfolded proteins. The sequence is that of ATP-dependent Clp protease proteolytic subunit from Ectopseudomonas mendocina (strain ymp) (Pseudomonas mendocina).